We begin with the raw amino-acid sequence, 150 residues long: Regulatory protein RecX (150 aa).

The protein belongs to the RecX family.

It localises to the cytoplasm. Its function is as follows. Modulates RecA activity. The chain is Regulatory protein RecX from Acidithiobacillus ferrooxidans (strain ATCC 23270 / DSM 14882 / CIP 104768 / NCIMB 8455) (Ferrobacillus ferrooxidans (strain ATCC 23270)).